Here is a 216-residue protein sequence, read N- to C-terminus: Large ribosomal subunit protein uL24m (216 aa).

A mitochondrion-targeting transit peptide spans 1–9 (MRLSALLAL). The residue at position 24 (S24) is a Phosphoserine. In terms of domain architecture, KOW spans 56–89 (LFCGDTVEILEGKDAGKQGKVVQVIRQRNWVVVG).

It belongs to the universal ribosomal protein uL24 family. In terms of assembly, component of the mitochondrial large ribosomal subunit (mt-LSU). Mature mammalian 55S mitochondrial ribosomes consist of a small (28S) and a large (39S) subunit. The 28S small subunit contains a 12S ribosomal RNA (12S mt-rRNA) and 30 different proteins. The 39S large subunit contains a 16S rRNA (16S mt-rRNA), a copy of mitochondrial valine transfer RNA (mt-tRNA(Val)), which plays an integral structural role, and 52 different proteins.

It is found in the mitochondrion. The sequence is that of Large ribosomal subunit protein uL24m (MRPL24) from Homo sapiens (Human).